We begin with the raw amino-acid sequence, 266 residues long: 3-methyl-2-oxobutanoate hydroxymethyltransferase (266 aa).

The Mg(2+) site is built by D47 and D86. 3-methyl-2-oxobutanoate contacts are provided by residues 47 to 48 (DS), D86, and K114. Residue E116 coordinates Mg(2+). E183 (proton acceptor) is an active-site residue.

The protein belongs to the PanB family. In terms of assembly, homodecamer; pentamer of dimers. Requires Mg(2+) as cofactor.

The protein resides in the cytoplasm. The enzyme catalyses 3-methyl-2-oxobutanoate + (6R)-5,10-methylene-5,6,7,8-tetrahydrofolate + H2O = 2-dehydropantoate + (6S)-5,6,7,8-tetrahydrofolate. The protein operates within cofactor biosynthesis; (R)-pantothenate biosynthesis; (R)-pantoate from 3-methyl-2-oxobutanoate: step 1/2. In terms of biological role, catalyzes the reversible reaction in which hydroxymethyl group from 5,10-methylenetetrahydrofolate is transferred onto alpha-ketoisovalerate to form ketopantoate. The chain is 3-methyl-2-oxobutanoate hydroxymethyltransferase from Idiomarina loihiensis (strain ATCC BAA-735 / DSM 15497 / L2-TR).